A 159-amino-acid chain; its full sequence is Eukaryotic translation initiation factor 5A-2 (159 aa).

Over residues 1 to 10 (MSDEEHHFEP) the composition is skewed to basic and acidic residues. The tract at residues 1 to 21 (MSDEEHHFEPAADAGASKTYP) is disordered. Hypusine is present on lysine 52.

The protein belongs to the eIF-5A family. Lys-52 undergoes hypusination, a unique post-translational modification that consists in the addition of a butylamino group from spermidine to lysine side chain, leading to the formation of the unusual amino acid hypusine. eIF-5As are the only known proteins to undergo this modification, which is essential for their function.

Translation factor that promotes translation elongation and termination, particularly upon ribosome stalling at specific amino acid sequence contexts. Binds between the exit (E) and peptidyl (P) site of the ribosome and promotes rescue of stalled ribosome: specifically required for efficient translation of polyproline-containing peptides as well as other motifs that stall the ribosome. Acts as a ribosome quality control (RQC) cofactor by joining the RQC complex to facilitate peptidyl transfer during CAT tailing step. The sequence is that of Eukaryotic translation initiation factor 5A-2 from Medicago sativa (Alfalfa).